Reading from the N-terminus, the 238-residue chain is Pyruvate formate-lyase-activating enzyme (238 aa).

A Radical SAM core domain is found at 15–236 (VDGPGIRTVV…KKLEKYLKEL (222 aa)). [4Fe-4S] cluster contacts are provided by C29, C33, and C36. Residues 35-37 (YCH), G78, 126-128 (DIK), and H199 contribute to the S-adenosyl-L-methionine site.

It belongs to the organic radical-activating enzymes family. [4Fe-4S] cluster serves as cofactor.

It localises to the cytoplasm. The enzyme catalyses glycyl-[formate C-acetyltransferase] + reduced [flavodoxin] + S-adenosyl-L-methionine = glycin-2-yl radical-[formate C-acetyltransferase] + semiquinone [flavodoxin] + 5'-deoxyadenosine + L-methionine + H(+). Functionally, activation of pyruvate formate-lyase under anaerobic conditions by generation of an organic free radical, using S-adenosylmethionine and reduced flavodoxin as cosubstrates to produce 5'-deoxy-adenosine. The chain is Pyruvate formate-lyase-activating enzyme (act) from Clostridium pasteurianum.